The sequence spans 189 residues: Frataxin-like protein, mitochondrial (189 aa).

The N-terminal 50 residues, 1 to 50 (MNCARLHQRIPLRAMALTTTSYPALAPSHSFANASTSVMTASAMAVAHRA), are a transit peptide targeting the mitochondrion.

It belongs to the frataxin family. As to quaternary structure, interacts with IscU; the interaction is direct.

The protein localises to the mitochondrion. The enzyme catalyses 4 Fe(2+) + O2 + 4 H(+) = 4 Fe(3+) + 2 H2O. Its function is as follows. Iron-binding protein which binds 2 iron atoms per monomer. Probably, acts as an iron carrier for the biosynthesis of Fe-S clusters. Stimulates the cysteine desulphurase activity of IscS in the presence of IscU. This chain is Frataxin-like protein, mitochondrial, found in Leishmania donovani.